Reading from the N-terminus, the 262-residue chain is Transcription factor Adf-1 (262 aa).

The segment at residues Asn-24–Arg-104 is a DNA-binding region (MADF). A BESS domain is found at Ser-217–Leu-256.

In terms of processing, O-glycosylated; contains N-acetylglucosamine side chains.

Its subcellular location is the nucleus. Functionally, may play an important role not only in the regulation of Adh expression but also in the transcription of other genes. The chain is Transcription factor Adf-1 (Adf1) from Drosophila melanogaster (Fruit fly).